The primary structure comprises 647 residues: Centrosomal protein of 72 kDa (647 aa).

LRR repeat units lie at residues 29–50 (ELQS…GHSL), 55–76 (GLKS…QYLT), and 77–98 (ALES…FRLH). Residues 111–150 (NPVVKVEPDYRLFVVHLLPKLQQLDDRPVRASERKASRLH) enclose the LRRCT domain. 2 stretches are compositionally biased toward basic and acidic residues: residues 152-161 (ASEDSLDSKE) and 220-234 (KGRE…ESRH). 3 disordered regions span residues 152 to 176 (ASED…HHPR), 211 to 256 (PPGS…RETR), and 285 to 413 (PEAS…ALPG). Phosphoserine is present on serine 237. Over residues 366-377 (SLSRQDSSESRN) the composition is skewed to basic and acidic residues. Serine 382 carries the post-translational modification Phosphoserine. The span at 390–402 (EEQRSRGVTDTRE) shows a compositional bias: basic and acidic residues. Phosphoserine is present on serine 404. Positions 476–620 (SLALESKSLQ…AQHRAEVEQM (145 aa)) form a coiled coil.

It belongs to the CEP72 family. Interacts with KIZ, PCM1 and CDK5RAP2.

It is found in the cytoplasm. The protein localises to the cytoskeleton. The protein resides in the microtubule organizing center. It localises to the centrosome. Its subcellular location is the centriolar satellite. Involved in the recruitment of key centrosomal proteins to the centrosome. Provides centrosomal microtubule-nucleation activity on the gamma-tubulin ring complexes (gamma-TuRCs) and has critical roles in forming a focused bipolar spindle, which is needed for proper tension generation between sister chromatids. Required for localization of KIZ, AKAP9 and gamma-tubulin ring complexes (gamma-TuRCs). Involved in centriole duplication. Required for CDK5RAP22, CEP152, WDR62 and CEP63 centrosomal localization and promotes the centrosomal localization of CDK2. This Homo sapiens (Human) protein is Centrosomal protein of 72 kDa (CEP72).